The sequence spans 1185 residues: 205 kDa microtubule-associated protein (1185 aa).

The segment covering 146 to 159 has biased composition (low complexity); sequence EPNQLPEQLQQQQQ. Positions 146 to 196 are disordered; the sequence is EPNQLPEQLQQQQQIESQGVHEDPRQEDEDEHSSVATTYGTSSLSENNSSP. The span at 179-196 shows a compositional bias: polar residues; that stretch reads SVATTYGTSSLSENNSSP. Phosphoserine occurs at positions 354 and 448. Position 450 is a phosphotyrosine (Tyr450). 3 positions are modified to phosphoserine: Ser709, Ser710, and Ser712. At Thr721 the chain carries Phosphothreonine. Position 728 is a phosphoserine (Ser728). Residues 745–977 are microtubule-binding; sequence TAADGQSISQ…ASTKVRPAAT (233 aa). Residues 856-866 show a composition bias toward low complexity; sequence SIATKTSTTSS. Disordered regions lie at residues 856–1035 and 1054–1114; these read SIAT…TSTA and SASL…SSPA. Composition is skewed to polar residues over residues 867–881 and 908–936; these read LTGN…NVGS and TITN…STNA. Ser874 carries the phosphoserine modification. Low complexity predominate over residues 940-952; it reads ATSGTGSVASSTA. Positions 989-999 are enriched in polar residues; it reads PRSTISSTTTV. Residues 1003–1015 are compositionally biased toward low complexity; that stretch reads PSTSTPSFSTRSP. Polar residues-rich tracts occupy residues 1016–1026 and 1054–1066; these read NKQQSNGLGKN and SASL…STSR. Phosphoserine is present on residues Ser1075 and Ser1086. Residues 1100-1111 show a composition bias toward polar residues; that stretch reads LTPQSKDGTAKS. Position 1121 is a phosphoserine (Ser1121).

It localises to the cytoplasm. It is found in the cytoskeleton. Its subcellular location is the spindle. In terms of biological role, may play an important role in the regulation of microtubule assembly and interaction. In Drosophila melanogaster (Fruit fly), this protein is 205 kDa microtubule-associated protein (Map205).